A 510-amino-acid polypeptide reads, in one-letter code: Hexose carrier protein HEX6 (510 aa).

Topologically, residues 1–22 are cytoplasmic; the sequence is MAAGLAITSEGGQYNGRMTSFV. 12 consecutive transmembrane segments (helical) span residues 23-43, 83-103, 118-128, 140-160, 169-189, 202-222, 284-304, 325-345, 349-369, 382-402, 428-448, and 451-471; these read ALSCMMAAMGGVIFGYDIGVS, SFTSSLYVAGLVASFFASSVT, VFLAXAALGGA, VLLGVGVGFANQAVPLYLSEM, INNGFQFSVGIGALSANLINY, ISLAMAAVPAAILTFGALFLP, LVMAVAIPFFQQVTGINVIAF, IVTGLVGSASTFISMLIVDKL, ALFIFGGVQMFVAQIMVGSIM, GYAYIVLILICIYVAGFGWSW, AVSFLFTFVVAQTFLSMLCHF, and GIFFFFGGWVVVMTAFVHFLL. The Cytoplasmic portion of the chain corresponds to 472–510; it reads PETKKVPIEKMDIVWRDHWFWKKIIGEEAAEENNKMEAA.

The protein belongs to the major facilitator superfamily. Sugar transporter (TC 2.A.1.1) family.

It localises to the membrane. In terms of biological role, active uptake of hexoses. Probable glucose/hydrogen symport. The polypeptide is Hexose carrier protein HEX6 (HEX6) (Ricinus communis (Castor bean)).